Reading from the N-terminus, the 130-residue chain is Small ribosomal subunit protein uS8 (130 aa).

Belongs to the universal ribosomal protein uS8 family. Part of the 30S ribosomal subunit. Contacts proteins S5 and S12.

Its function is as follows. One of the primary rRNA binding proteins, it binds directly to 16S rRNA central domain where it helps coordinate assembly of the platform of the 30S subunit. This Ruegeria sp. (strain TM1040) (Silicibacter sp.) protein is Small ribosomal subunit protein uS8.